We begin with the raw amino-acid sequence, 75 residues long: DNA-directed RNA polymerase subunit Rpo5 (75 aa).

Belongs to the archaeal Rpo5/eukaryotic RPB5 RNA polymerase subunit family. In terms of assembly, part of the RNA polymerase complex.

The protein resides in the cytoplasm. The enzyme catalyses RNA(n) + a ribonucleoside 5'-triphosphate = RNA(n+1) + diphosphate. In terms of biological role, DNA-dependent RNA polymerase (RNAP) catalyzes the transcription of DNA into RNA using the four ribonucleoside triphosphates as substrates. The protein is DNA-directed RNA polymerase subunit Rpo5 of Halobacterium salinarum (strain ATCC 700922 / JCM 11081 / NRC-1) (Halobacterium halobium).